The primary structure comprises 167 residues: Protein-export protein SecB (167 aa).

Belongs to the SecB family. As to quaternary structure, homotetramer, a dimer of dimers. One homotetramer interacts with 1 SecA dimer.

The protein resides in the cytoplasm. Functionally, one of the proteins required for the normal export of preproteins out of the cell cytoplasm. It is a molecular chaperone that binds to a subset of precursor proteins, maintaining them in a translocation-competent state. It also specifically binds to its receptor SecA. The protein is Protein-export protein SecB of Wolbachia sp. subsp. Brugia malayi (strain TRS).